The chain runs to 619 residues: Probable Xaa-Pro aminopeptidase P (619 aa).

Residues D416, D427, E525, and E539 each contribute to the Mn(2+) site.

The protein belongs to the peptidase M24B family. Mn(2+) serves as cofactor.

It catalyses the reaction Release of any N-terminal amino acid, including proline, that is linked to proline, even from a dipeptide or tripeptide.. Catalyzes the removal of a penultimate prolyl residue from the N-termini of peptides. This is Probable Xaa-Pro aminopeptidase P (AMPP) from Tuber melanosporum (strain Mel28) (Perigord black truffle).